The primary structure comprises 546 residues: Probable protein kinase UbiB (546 aa).

Positions 124–502 (DFEIKPLASA…HVRQGQSRYF (379 aa)) constitute a Protein kinase domain. ATP contacts are provided by residues 130 to 138 (LASASIAQV) and K153. The active-site Proton acceptor is the D288. 2 consecutive transmembrane segments (helical) span residues 501-521 (YFLG…VSRP) and 522-542 (EWGL…FVGW).

It belongs to the ABC1 family. UbiB subfamily.

Its subcellular location is the cell inner membrane. Its pathway is cofactor biosynthesis; ubiquinone biosynthesis [regulation]. In terms of biological role, is probably a protein kinase regulator of UbiI activity which is involved in aerobic coenzyme Q (ubiquinone) biosynthesis. This chain is Probable protein kinase UbiB, found in Shigella sonnei (strain Ss046).